We begin with the raw amino-acid sequence, 93 residues long: Small ribosomal subunit protein uS19c (93 aa).

It belongs to the universal ribosomal protein uS19 family.

The protein localises to the plastid. It is found in the chloroplast. Protein S19 forms a complex with S13 that binds strongly to the 16S ribosomal RNA. The protein is Small ribosomal subunit protein uS19c of Stigeoclonium helveticum (Green alga).